We begin with the raw amino-acid sequence, 129 residues long: Large ribosomal subunit protein bL21 (129 aa).

The segment at 100–129 is disordered; it reads DGAKPSKKAAEKKAPKAAPKKAAAKAESAE.

Belongs to the bacterial ribosomal protein bL21 family. In terms of assembly, part of the 50S ribosomal subunit. Contacts protein L20.

Functionally, this protein binds to 23S rRNA in the presence of protein L20. The sequence is that of Large ribosomal subunit protein bL21 from Brucella anthropi (strain ATCC 49188 / DSM 6882 / CCUG 24695 / JCM 21032 / LMG 3331 / NBRC 15819 / NCTC 12168 / Alc 37) (Ochrobactrum anthropi).